Here is a 473-residue protein sequence, read N- to C-terminus: Probable serine/threonine-protein kinase glkA (473 aa).

The disordered stretch occupies residues 1-84 (MTIPTDNNSS…QSSSTATVNS (84 aa)). Residues 7–84 (NNSSNNKGYN…QSSSTATVNS (78 aa)) are compositionally biased toward low complexity. A Protein kinase domain is found at 91–366 (YEIIKQVGQG…IDEIIAHPFL (276 aa)). Residues 97–105 (VGQGTFGKV) and K119 each bind ATP. The active-site Proton acceptor is the D208. Disordered stretches follow at residues 389–418 (GKSSLTTNSTSSSSTTANMTSLASSSSNNK) and 437–473 (SSNLKSIDNSNNGKSSSSSNNIPSLNNSNNGVITNTI). Positions 442 to 466 (SIDNSNNGKSSSSSNNIPSLNNSNN) are enriched in low complexity.

This sequence belongs to the protein kinase superfamily. CMGC Ser/Thr protein kinase family. GSK-3 subfamily.

It carries out the reaction L-seryl-[tau protein] + ATP = O-phospho-L-seryl-[tau protein] + ADP + H(+). The catalysed reaction is L-threonyl-[tau protein] + ATP = O-phospho-L-threonyl-[tau protein] + ADP + H(+). This chain is Probable serine/threonine-protein kinase glkA (glkA), found in Dictyostelium discoideum (Social amoeba).